Here is a 437-residue protein sequence, read N- to C-terminus: GTPase Obg (437 aa).

An Obg domain is found at 2–160 (SLFLDTARIE…KILLLELRVL (159 aa)). Residues 161–338 (ADVGLVGFPS…LLARTSELLA (178 aa)) form the OBG-type G domain. GTP is bound by residues 167 to 174 (GFPSVGKS), 192 to 196 (FTTIT), 214 to 217 (DMPG), 284 to 287 (NKMD), and 319 to 321 (SGL). Mg(2+) contacts are provided by S174 and T194. An OCT domain is found at 359–437 (GFEEEEKPFK…IQKFEFEFVD (79 aa)).

The protein belongs to the TRAFAC class OBG-HflX-like GTPase superfamily. OBG GTPase family. As to quaternary structure, monomer. Mg(2+) is required as a cofactor.

It localises to the cytoplasm. An essential GTPase which binds GTP, GDP and possibly (p)ppGpp with moderate affinity, with high nucleotide exchange rates and a fairly low GTP hydrolysis rate. Plays a role in control of the cell cycle, stress response, ribosome biogenesis and in those bacteria that undergo differentiation, in morphogenesis control. This Lactococcus lactis subsp. lactis (strain IL1403) (Streptococcus lactis) protein is GTPase Obg.